Here is a 56-residue protein sequence, read N- to C-terminus: Zinc finger mu-protein HVO_0758 (56 aa).

4 residues coordinate Zn(2+): cysteine 23, cysteine 26, cysteine 45, and cysteine 48. 2 short sequence motifs (c(P)XCG motif) span residues 23 to 27 (CSECG) and 45 to 49 (CADCG).

As to quaternary structure, monomer.

Its function is as follows. Zinc-binding protein that binds one zinc ion. Is involved in biofilm formation, swarming and glycerol metabolism regulation. This Haloferax volcanii (strain ATCC 29605 / DSM 3757 / JCM 8879 / NBRC 14742 / NCIMB 2012 / VKM B-1768 / DS2) (Halobacterium volcanii) protein is Zinc finger mu-protein HVO_0758.